An 805-amino-acid chain; its full sequence is Mediator of RNA polymerase II transcription subunit 25 (805 aa).

Disordered regions lie at residues 430–455 (GSAQNTQNSAPSSFTSTAPSMSGQTV) and 786–805 (SQSQGSSQGLPITPGGGFMN). Low complexity-rich tracts occupy residues 438-451 (SAPSSFTSTAPSMS) and 786-795 (SQSQGSSQGL).

The protein belongs to the Mediator complex subunit 25 family. In terms of assembly, interacts with MYC2 (via N-terminus). MED25 competes with JAZ7 for binding to MYC2.

Its function is as follows. Component of the Mediator complex, a coactivator involved in the regulated transcription of nearly all RNA polymerase II-dependent genes. Mediator functions as a bridge to convey information from gene-specific regulatory proteins to the basal RNA polymerase II transcription machinery. Mediator is recruited to promoters by direct interactions with regulatory proteins and serves as a scaffold for the assembly of a functional pre-initiation complex with RNA polymerase II and the general transcription factors. Plays a positive role in wound-induced activation of jasmonate-responsive genes whose promoters are targeted by MYC2. The sequence is that of Mediator of RNA polymerase II transcription subunit 25 from Solanum lycopersicum (Tomato).